Here is a 221-residue protein sequence, read N- to C-terminus: Iron-sulfur cluster repair protein YtfE (221 aa).

The protein belongs to the RIC family. YtfE subfamily. Homodimer.

The protein localises to the cytoplasm. In terms of biological role, di-iron-containing protein involved in the repair of iron-sulfur clusters damaged by oxidative and nitrosative stress conditions. This Pectobacterium carotovorum subsp. carotovorum (strain PC1) protein is Iron-sulfur cluster repair protein YtfE.